The chain runs to 124 residues: Small ribosomal subunit protein uS12 (124 aa).

The residue at position 89 (Asp89) is a 3-methylthioaspartic acid. Positions 103-124 (DTAGVKDRRQSRSKYGAKSPKE) are disordered.

Belongs to the universal ribosomal protein uS12 family. Part of the 30S ribosomal subunit. Contacts proteins S8 and S17. May interact with IF1 in the 30S initiation complex.

Its function is as follows. With S4 and S5 plays an important role in translational accuracy. Interacts with and stabilizes bases of the 16S rRNA that are involved in tRNA selection in the A site and with the mRNA backbone. Located at the interface of the 30S and 50S subunits, it traverses the body of the 30S subunit contacting proteins on the other side and probably holding the rRNA structure together. The combined cluster of proteins S8, S12 and S17 appears to hold together the shoulder and platform of the 30S subunit. In Prochlorococcus marinus (strain NATL2A), this protein is Small ribosomal subunit protein uS12.